Consider the following 380-residue polypeptide: Glucose-1-phosphate adenylyltransferase (380 aa).

Residues G164, 179-180 (EK), and S190 contribute to the alpha-D-glucose 1-phosphate site.

The protein belongs to the bacterial/plant glucose-1-phosphate adenylyltransferase family. In terms of assembly, homotetramer.

It carries out the reaction alpha-D-glucose 1-phosphate + ATP + H(+) = ADP-alpha-D-glucose + diphosphate. It functions in the pathway glycan biosynthesis; glycogen biosynthesis. Its function is as follows. Involved in the biosynthesis of ADP-glucose, a building block required for the elongation reactions to produce glycogen. Catalyzes the reaction between ATP and alpha-D-glucose 1-phosphate (G1P) to produce pyrophosphate and ADP-Glc. The polypeptide is Glucose-1-phosphate adenylyltransferase (Lacticaseibacillus casei (strain BL23) (Lactobacillus casei)).